Reading from the N-terminus, the 208-residue chain is Small ribosomal subunit protein uS4 (208 aa).

The 62-residue stretch at 98 to 159 folds into the S4 RNA-binding domain; the sequence is LRLDNVVFRL…RSKKVVRITE (62 aa).

Belongs to the universal ribosomal protein uS4 family. Part of the 30S ribosomal subunit. Contacts protein S5. The interaction surface between S4 and S5 is involved in control of translational fidelity.

Its function is as follows. One of the primary rRNA binding proteins, it binds directly to 16S rRNA where it nucleates assembly of the body of the 30S subunit. Functionally, with S5 and S12 plays an important role in translational accuracy. This chain is Small ribosomal subunit protein uS4, found in Anaeromyxobacter dehalogenans (strain 2CP-1 / ATCC BAA-258).